Here is a 218-residue protein sequence, read N- to C-terminus: Small ribosomal subunit protein uS3 (218 aa).

One can recognise a KH type-2 domain in the interval 38–106; it reads IREYISKRLS…RVHINILEIK (69 aa).

Belongs to the universal ribosomal protein uS3 family. Part of the 30S ribosomal subunit. Forms a tight complex with proteins S10 and S14.

Functionally, binds the lower part of the 30S subunit head. Binds mRNA in the 70S ribosome, positioning it for translation. In Bacillus subtilis (strain 168), this protein is Small ribosomal subunit protein uS3.